A 283-amino-acid polypeptide reads, in one-letter code: Nucleotide-binding protein ABBFA_002973 (283 aa).

Gly-9–Ser-16 is an ATP binding site. Residue Asp-59–Ser-62 participates in GTP binding.

Belongs to the RapZ-like family.

Its function is as follows. Displays ATPase and GTPase activities. The polypeptide is Nucleotide-binding protein ABBFA_002973 (Acinetobacter baumannii (strain AB307-0294)).